A 466-amino-acid polypeptide reads, in one-letter code: MALNPDRLFSAEPGTREIARRLFASVEKLPIISPHGHTEPIWYARNEAFPDPASLFVKPDHYITRMLYSQGHSLESLGIASRDGRPSETDARKIWRLFATNWYLFRATPSRLWFEHAMETVFGITERLSQENADRIFDAIADQLTQPHMRPRALYDRFNIEAISTTDAATDPLIYHDEVIASGWHGRIIPAYRPDAAVDAGRPDFASEVEKLVGVAGTPLTWQGYLDAHRNRREYFKRRGATSSDHGHPTAQTADLSAGDASRLFDRVIKGNASTSDAEMFRAQMLTEMARMSIDDGLVMQIHPGSFRNHNPTVFERFGLDKGADIPRQTGFVDQLKPLLDGFGNDPRLTVILFTLDETAYSRELAPLAGDYPALKLGPAWWFFDSPEGILRYRKLTTETAGFYNTVGFNDDTRAYLSIPARHDMARRVDCAYLAGLVADHRLEEDEAYEVAHDLAYRLAKQTYKL.

This sequence belongs to the metallo-dependent hydrolases superfamily. Uronate isomerase family.

It carries out the reaction D-glucuronate = D-fructuronate. The enzyme catalyses aldehydo-D-galacturonate = keto-D-tagaturonate. It functions in the pathway carbohydrate metabolism; pentose and glucuronate interconversion. This is Uronate isomerase from Brucella suis (strain ATCC 23445 / NCTC 10510).